Reading from the N-terminus, the 216-residue chain is Thiopurine S-methyltransferase (216 aa).

Positions 11, 46, 67, and 122 each coordinate S-adenosyl-L-methionine.

The protein belongs to the class I-like SAM-binding methyltransferase superfamily. TPMT family.

It localises to the cytoplasm. The enzyme catalyses S-adenosyl-L-methionine + a thiopurine = S-adenosyl-L-homocysteine + a thiopurine S-methylether.. The polypeptide is Thiopurine S-methyltransferase (Vibrio parahaemolyticus serotype O3:K6 (strain RIMD 2210633)).